A 481-amino-acid polypeptide reads, in one-letter code: Proline--tRNA ligase (481 aa).

This sequence belongs to the class-II aminoacyl-tRNA synthetase family. ProS type 3 subfamily. In terms of assembly, homodimer.

It is found in the cytoplasm. The enzyme catalyses tRNA(Pro) + L-proline + ATP = L-prolyl-tRNA(Pro) + AMP + diphosphate. Functionally, catalyzes the attachment of proline to tRNA(Pro) in a two-step reaction: proline is first activated by ATP to form Pro-AMP and then transferred to the acceptor end of tRNA(Pro). This Chlorobaculum tepidum (strain ATCC 49652 / DSM 12025 / NBRC 103806 / TLS) (Chlorobium tepidum) protein is Proline--tRNA ligase.